Here is a 229-residue protein sequence, read N- to C-terminus: Protein GLC8 (229 aa).

3 disordered regions span residues 1-21 (MGGI…QQDP), 35-62 (TQKN…EIIG), and 107-229 (QFQD…TKEP). Ser12 carries the post-translational modification Phosphoserine. Residues 107-117 (QFQDIHIDEPK) show a composition bias toward basic and acidic residues. A Phosphothreonine; by PHO85 modification is found at Thr118. Ser158 carries the phosphoserine modification. Over residues 164–173 (FEIKENKQPD) the composition is skewed to basic and acidic residues. The span at 175–184 (ETNDENDEDS) shows a compositional bias: acidic residues. Ser184 carries the post-translational modification Phosphoserine. Residues 185-196 (PEARHKKFEEMR) show a composition bias toward basic and acidic residues.

Phosphorylated by the cyclin-CDKs PCL6-PHO85 and PCL7-PHO85. Phosphorylation of Thr-118 inactivates GLC8.

Functionally, modulator of GLC7 type-1 protein phosphatase. This is Protein GLC8 (GLC8) from Saccharomyces cerevisiae (strain ATCC 204508 / S288c) (Baker's yeast).